The following is a 56-amino-acid chain: Alpha-pompilidotoxin (56 aa).

A signal peptide spans methionine 1–alanine 22. The propeptide occupies glutamate 23–proline 42. Residue leucine 55 is modified to Leucine amide.

Expressed by the venom gland.

It localises to the secreted. Its function is as follows. Inhibits sodium channels (Nav) inactivation. Shows two types of inhibitory activities on channels. Inhibition of hNav1.6/SCN8A shows a large increase in the steady-state current component without any increase in the slow component, whereas inhibition of hNav1.1/SCN1A, hNav1.2/SCN2A, hNav1.3/SCN3A and hNav1.7/SCN9A shows a large increase in the slow component with only a small steady-state component. Is 5-fold less potent than beta-PMTX for inducing repetitive action potentials in lobster neuromuscular junctions. This is Alpha-pompilidotoxin from Anoplius samariensis (Solitary wasp).